Reading from the N-terminus, the 108-residue chain is Tetrahydromethanopterin S-methyltransferase subunit B (108 aa).

Residues 80–100 (AFYGIVVGLAFSGLLALIIFI) form a helical membrane-spanning segment.

The protein belongs to the MtrB family. In terms of assembly, the complex is composed of 8 subunits; MtrA, MtrB, MtrC, MtrD, MtrE, MtrF, MtrG and MtrH.

It is found in the cell membrane. It catalyses the reaction 5-methyl-5,6,7,8-tetrahydromethanopterin + coenzyme M + 2 Na(+)(in) = 5,6,7,8-tetrahydromethanopterin + methyl-coenzyme M + 2 Na(+)(out). The protein operates within one-carbon metabolism; methanogenesis from CO(2); methyl-coenzyme M from 5,10-methylene-5,6,7,8-tetrahydromethanopterin: step 2/2. Functionally, part of a complex that catalyzes the formation of methyl-coenzyme M and tetrahydromethanopterin from coenzyme M and methyl-tetrahydromethanopterin. This is an energy-conserving, sodium-ion translocating step. The polypeptide is Tetrahydromethanopterin S-methyltransferase subunit B (Methanosarcina acetivorans (strain ATCC 35395 / DSM 2834 / JCM 12185 / C2A)).